The following is a 110-amino-acid chain: Cytochrome c (110 aa).

Heme c-binding residues include cysteine 21, cysteine 24, histidine 25, and methionine 87.

It belongs to the cytochrome c family. In terms of processing, binds 1 heme c group covalently per subunit.

Its subcellular location is the mitochondrion intermembrane space. Functionally, electron carrier protein. The oxidized form of the cytochrome c heme group can accept an electron from the heme group of the cytochrome c1 subunit of cytochrome reductase. Cytochrome c then transfers this electron to the cytochrome oxidase complex, the final protein carrier in the mitochondrial electron-transport chain. This Kluyveromyces lactis (strain ATCC 8585 / CBS 2359 / DSM 70799 / NBRC 1267 / NRRL Y-1140 / WM37) (Yeast) protein is Cytochrome c (CYCK).